A 439-amino-acid chain; its full sequence is D-erythronate kinase (439 aa).

ATP-binding positions include Ser-253, 366–369 (GGDV), and Gly-412.

It belongs to the four-carbon acid sugar kinase family.

It catalyses the reaction D-erythronate + ATP = 4-phospho-D-erythronate + ADP + H(+). In terms of biological role, catalyzes the ATP-dependent phosphorylation of D-erythronate to D-erythronate 4-phosphate. Can also phosphorylate D-threonate and 4-hydroxy-L-threonine, with lower efficiency. The sequence is that of D-erythronate kinase from Heliobacterium modesticaldum (strain ATCC 51547 / Ice1).